The following is a 317-amino-acid chain: Melanocyte-stimulating hormone receptor (317 aa).

The Extracellular segment spans residues 1–37; the sequence is MPVLGSQRRLLGSLNCTPPATFSLTLAPNRTGPQCLE. Asn-29 carries N-linked (GlcNAc...) asparagine glycosylation. A helical membrane pass occupies residues 38–63; the sequence is VSIPDGLFLSLGLVSLVENVLVVAAI. The Cytoplasmic portion of the chain corresponds to 64–72; it reads AKNRNLHSP. A helical membrane pass occupies residues 73 to 93; that stretch reads MYYFICCLAVSDLLVSVSNVL. The Extracellular segment spans residues 94 to 118; the sequence is ETAVMLLLEAGALAARAAVVQQLDN. The helical transmembrane segment at 119-140 threads the bilayer; sequence VIDVLICGSMVSSLCFLGAIAM. Residues 141-163 are Cytoplasmic-facing; that stretch reads DRYISIFYALRYHSVVTLPRAWR. Residues 164 to 183 traverse the membrane as a helical segment; the sequence is IIAAIWVASILTSLLFITYY. Over 184-191 the chain is Extracellular; it reads NHTVVLLC. A helical transmembrane segment spans residues 192 to 211; sequence LVGFFIAMLALMAILYVHML. Residues 212 to 240 are Cytoplasmic-facing; sequence ARACQHARDIARLQKRQHPIHQGFGLKGA. A helical transmembrane segment spans residues 241 to 266; sequence ATLTILLGVFFLCWGPFFLHLSLIVL. Residues 267–279 are Extracellular-facing; it reads CPQHPTCGCIFKN. The helical transmembrane segment at 280–300 threads the bilayer; the sequence is FNLFLALIICNAIVDPLIYAF. The Cytoplasmic portion of the chain corresponds to 301–317; that stretch reads RSQELRKTLQEVLQCSW. The S-palmitoyl cysteine moiety is linked to residue Cys-315.

The protein belongs to the G-protein coupled receptor 1 family. Interacts with MGRN1, but does not undergo MGRN1-mediated ubiquitination; this interaction competes with GNAS-binding and thus inhibits agonist-induced cAMP production. Interacts with OPN3; the interaction results in a decrease in MC1R-mediated cAMP signaling and ultimately a decrease in melanin production in melanocytes.

Its subcellular location is the cell membrane. Functionally, receptor for MSH (alpha, beta and gamma) and ACTH. The activity of this receptor is mediated by G proteins which activate adenylate cyclase. Mediates melanogenesis, the production of eumelanin (black/brown) and phaeomelanin (red/yellow), via regulation of cAMP signaling in melanocytes. In Alces alces alces (European moose), this protein is Melanocyte-stimulating hormone receptor (MC1R).